Consider the following 283-residue polypeptide: NAD kinase (283 aa).

The active-site Proton acceptor is the Asp66. NAD(+)-binding positions include 66–67, 140–141, Arg151, Lys168, Asp170, 181–186, and Gln240; these read DG, ND, and TGYCLS.

Belongs to the NAD kinase family. It depends on a divalent metal cation as a cofactor.

It is found in the cytoplasm. The enzyme catalyses NAD(+) + ATP = ADP + NADP(+) + H(+). In terms of biological role, involved in the regulation of the intracellular balance of NAD and NADP, and is a key enzyme in the biosynthesis of NADP. Catalyzes specifically the phosphorylation on 2'-hydroxyl of the adenosine moiety of NAD to yield NADP. The polypeptide is NAD kinase (Geobacter metallireducens (strain ATCC 53774 / DSM 7210 / GS-15)).